Reading from the N-terminus, the 730-residue chain is Procollagen-lysine,2-oxoglutarate 5-dioxygenase 1 (730 aa).

The N-terminal stretch at 1 to 20 is a signal peptide; that stretch reads MVPPAVLLPWVVLPLLGVQG. N-linked (GlcNAc...) asparagine glycosylation is found at asparagine 200, asparagine 403, and asparagine 541. One can recognise a Fe2OG dioxygenase domain in the interval 639–730; it reads QFELAFVVRY…RYIAVSFIDP (92 aa). The Fe cation site is built by histidine 659 and aspartate 661. N-linked (GlcNAc...) asparagine glycosylation is present at asparagine 689. Histidine 711 is a binding site for Fe cation. Arginine 721 is a catalytic residue.

Homodimer. The cofactor is Fe(2+). Requires L-ascorbate as cofactor.

It is found in the rough endoplasmic reticulum membrane. The enzyme catalyses L-lysyl-[collagen] + 2-oxoglutarate + O2 = (5R)-5-hydroxy-L-lysyl-[collagen] + succinate + CO2. Functionally, forms hydroxylysine residues in -Xaa-Lys-Gly- sequences in collagens. These hydroxylysines serve as sites of attachment for carbohydrate units and are essential for the stability of the intermolecular collagen cross-links. The sequence is that of Procollagen-lysine,2-oxoglutarate 5-dioxygenase 1 (PLOD1) from Gallus gallus (Chicken).